We begin with the raw amino-acid sequence, 359 residues long: Ornithine carbamoyltransferase, mitochondrial (359 aa).

The N-terminal 24 residues, 1–24, are a transit peptide targeting the mitochondrion; sequence MASLRSVLKSQSLRHTVRSYSSQT. Residues 87–90, R138, H165, and Q168 each bind carbamoyl phosphate; that span reads STRT. Residues N205, D271, S275, and M276 each coordinate L-ornithine. The Proton acceptor role is filled by C313. Residues 313–314 and R340 each bind carbamoyl phosphate; that span reads CL.

This sequence belongs to the aspartate/ornithine carbamoyltransferase superfamily. OTCase family. In terms of assembly, homotrimer.

Its subcellular location is the mitochondrion matrix. The catalysed reaction is carbamoyl phosphate + L-ornithine = L-citrulline + phosphate + H(+). It participates in amino-acid biosynthesis; L-arginine biosynthesis; L-arginine from L-ornithine and carbamoyl phosphate: step 1/3. The chain is Ornithine carbamoyltransferase, mitochondrial (argB) from Emericella nidulans (strain FGSC A4 / ATCC 38163 / CBS 112.46 / NRRL 194 / M139) (Aspergillus nidulans).